The sequence spans 288 residues: Prepilin leader peptidase/N-methyltransferase (288 aa).

A helical membrane pass occupies residues 14 to 34 (FITLATVLGLLVGSFLNVVVY). 4 residues coordinate Zn(2+): Cys71, Cys74, Cys96, and Cys99. The next 6 membrane-spanning stretches (helical) occupy residues 103–123 (ISVR…VVAW), 127–147 (ASVE…LSLI), 158–178 (IVLP…WVPL), 182–202 (VCGA…FKLV), 227–247 (VLPL…VYLL), and 254–274 (MGTA…AVLW).

The protein belongs to the peptidase A24 family. The cofactor is Zn(2+).

It localises to the cell inner membrane. The enzyme catalyses Typically cleaves a -Gly-|-Phe- bond to release an N-terminal, basic peptide of 5-8 residues from type IV prepilin, and then N-methylates the new N-terminal amino group, the methyl donor being S-adenosyl-L-methionine.. In terms of biological role, plays an essential role in type IV pili and type II pseudopili formation by proteolytically removing the leader sequence from substrate proteins and subsequently monomethylating the alpha-amino group of the newly exposed N-terminal phenylalanine. This Pseudomonas putida (Arthrobacter siderocapsulatus) protein is Prepilin leader peptidase/N-methyltransferase (pilD).